The following is an 86-amino-acid chain: Acyl carrier protein (86 aa).

The Carrier domain occupies 10–85 (DKIEQKVIEM…DVIQYIKERQ (76 aa)). Position 45 is an O-(pantetheine 4'-phosphoryl)serine (serine 45).

The protein belongs to the acyl carrier protein (ACP) family. 4'-phosphopantetheine is transferred from CoA to a specific serine of apo-ACP by AcpS. This modification is essential for activity because fatty acids are bound in thioester linkage to the sulfhydryl of the prosthetic group.

It is found in the cytoplasm. It participates in lipid metabolism; fatty acid biosynthesis. Functionally, carrier of the growing fatty acid chain in fatty acid biosynthesis. This is Acyl carrier protein from Rickettsia canadensis (strain McKiel).